The primary structure comprises 202 residues: LexA repressor (202 aa).

Residues 28–48 constitute a DNA-binding region (H-T-H motif); that stretch reads RAEIAQELGFKSPNAAEEHLK. Active-site for autocatalytic cleavage activity residues include S123 and K160.

Belongs to the peptidase S24 family. As to quaternary structure, homodimer.

The enzyme catalyses Hydrolysis of Ala-|-Gly bond in repressor LexA.. In terms of biological role, represses a number of genes involved in the response to DNA damage (SOS response), including recA and lexA. In the presence of single-stranded DNA, RecA interacts with LexA causing an autocatalytic cleavage which disrupts the DNA-binding part of LexA, leading to derepression of the SOS regulon and eventually DNA repair. The protein is LexA repressor of Pseudomonas chlororaphis (Pseudomonas aureofaciens).